The chain runs to 366 residues: Chorismate synthase (366 aa).

Residues Arg-48 and Arg-54 each coordinate NADP(+). Residues 125–127 (RSS), 238–239 (NA), Gly-278, 293–297 (KPTSS), and Arg-319 contribute to the FMN site.

The protein belongs to the chorismate synthase family. Homotetramer. It depends on FMNH2 as a cofactor.

It catalyses the reaction 5-O-(1-carboxyvinyl)-3-phosphoshikimate = chorismate + phosphate. Its pathway is metabolic intermediate biosynthesis; chorismate biosynthesis; chorismate from D-erythrose 4-phosphate and phosphoenolpyruvate: step 7/7. In terms of biological role, catalyzes the anti-1,4-elimination of the C-3 phosphate and the C-6 proR hydrogen from 5-enolpyruvylshikimate-3-phosphate (EPSP) to yield chorismate, which is the branch point compound that serves as the starting substrate for the three terminal pathways of aromatic amino acid biosynthesis. This reaction introduces a second double bond into the aromatic ring system. The chain is Chorismate synthase from Methylococcus capsulatus (strain ATCC 33009 / NCIMB 11132 / Bath).